Consider the following 200-residue polypeptide: ATP synthase subunit s, mitochondrial (200 aa).

The transit peptide at Met-1–Tyr-25 directs the protein to the mitochondrion. The interval Met-1–Met-61 is N-terminal domain. Gly-59 contributes to the Mg(2+) binding site. LRR repeat units lie at residues Val-62–Ile-87, Gln-88–Leu-116, Cys-117–Leu-141, and Glu-142–Leu-173. Mg(2+) is bound at residue Thr-93.

This sequence belongs to the ATP synthase subunit s family. In terms of assembly, homotetramer. Associates with ATP synthase.

It localises to the mitochondrion. The protein resides in the mitochondrion inner membrane. Its function is as follows. Involved in regulation of mitochondrial membrane ATP synthase. Necessary for H(+) conduction of ATP synthase. Facilitates energy-driven catalysis of ATP synthesis by blocking a proton leak through an alternative proton exit pathway. The protein is ATP synthase subunit s, mitochondrial (DMAC2L) of Macaca fascicularis (Crab-eating macaque).